Consider the following 640-residue polypeptide: Envelope glycoprotein (640 aa).

A signal peptide spans 1–32 (MEGPAFSKPLKDKINPWGPLIILGILIRAGVS). Residues 33–582 (VQHDSPHQVF…FNKSPWFTTL (550 aa)) are Extracellular-facing. 2 N-linked (GlcNAc...) asparagine; by host glycosylation sites follow: N43 and N58. 2 cysteine pairs are disulfide-bonded: C109-C126 and C118-C131. An N-linked (GlcNAc...) asparagine; by host glycan is attached at N297. 6 cysteine pairs are disulfide-bonded: C307/C310, C307/C535, C337/C391, C356/C368, C398/C411, and C527/C534. The short motif at 307-310 (CWLC) is the CXXC element. N-linked (GlcNAc...) asparagine; by host glycosylation is found at N329 and N336. N369 carries an N-linked (GlcNAc...) asparagine; by host glycan. A fusion peptide region spans residues 444–464 (VSLTLALLLGGLTMGGIAAGV). Positions 473-509 (ATQQFQQLQAAMHDDLKEVEKSITNLEKSLTSLSEVV) form a coiled coil. The tract at residues 510–526 (LQNRRGLDLLFLKEGGL) is immunosuppression. Residues 527–535 (CAALKEECC) carry the CX6CC motif. A helical transmembrane segment spans residues 583-603 (ISTIMGPLIILLLILLFGPWI). Residues 604 to 640 (LNRLVQFIKDRISVVQALVLTQQYHQLKTIGDCKSRE) are Cytoplasmic-facing. A YXXL motif; contains endocytosis signal motif is present at residues 627-630 (YHQL).

As to quaternary structure, the mature envelope protein (Env) consists of a trimer of SU-TM heterodimers attached by a labile interchain disulfide bond. Specific enzymatic cleavages in vivo yield mature proteins. Envelope glycoproteins are synthesized as an inactive precursor that is N-glycosylated and processed likely by host cell furin or by a furin-like protease in the Golgi to yield the mature SU and TM proteins. The cleavage site between SU and TM requires the minimal sequence [KR]-X-[KR]-R. The R-peptide is released from the C-terminus of the cytoplasmic tail of the TM protein upon particle formation as a result of proteolytic cleavage by the viral protease. Cleavage of this peptide is required for TM to become fusogenic. Post-translationally, the CXXC motif is highly conserved across a broad range of retroviral envelope proteins. It is thought to participate in the formation of a labile disulfide bond possibly with the CX6CC motif present in the transmembrane protein. Isomerization of the intersubunit disulfide bond to an SU intrachain disulfide bond is thought to occur upon receptor recognition in order to allow membrane fusion. In terms of processing, the R-peptide is palmitoylated.

It localises to the virion membrane. It is found in the host cell membrane. Its function is as follows. The surface protein (SU) attaches the virus to the host cell by binding to its receptor. This interaction triggers the refolding of the transmembrane protein (TM) and is thought to activate its fusogenic potential by unmasking its fusion peptide. Fusion occurs at the host cell plasma membrane. The transmembrane protein (TM) acts as a class I viral fusion protein. Under the current model, the protein has at least 3 conformational states: pre-fusion native state, pre-hairpin intermediate state, and post-fusion hairpin state. During viral and target cell membrane fusion, the coiled coil regions (heptad repeats) assume a trimer-of-hairpins structure, positioning the fusion peptide in close proximity to the C-terminal region of the ectodomain. The formation of this structure appears to drive apposition and subsequent fusion of viral and target cell membranes. Membranes fusion leads to delivery of the nucleocapsid into the cytoplasm. The sequence is that of Envelope glycoprotein (env) from Mus musculus (Mouse).